The chain runs to 172 residues: Shikimate kinase (172 aa).

11–16 (GAGKST) contributes to the ATP binding site. Residue Ser15 participates in Mg(2+) binding. Substrate is bound by residues Asp33, Arg57, and Gly79. Residue Arg117 participates in ATP binding. Arg136 serves as a coordination point for substrate. Residue Arg153 participates in ATP binding.

It belongs to the shikimate kinase family. Monomer. Mg(2+) serves as cofactor.

It localises to the cytoplasm. It carries out the reaction shikimate + ATP = 3-phosphoshikimate + ADP + H(+). It functions in the pathway metabolic intermediate biosynthesis; chorismate biosynthesis; chorismate from D-erythrose 4-phosphate and phosphoenolpyruvate: step 5/7. Functionally, catalyzes the specific phosphorylation of the 3-hydroxyl group of shikimic acid using ATP as a cosubstrate. This chain is Shikimate kinase, found in Pseudomonas savastanoi pv. phaseolicola (strain 1448A / Race 6) (Pseudomonas syringae pv. phaseolicola (strain 1448A / Race 6)).